The sequence spans 205 residues: Histone H1, early embryonic (205 aa).

2 disordered regions span residues 1–21 (MAEKNSSKKVTTKKPAAHPPA) and 94–205 (AKAQ…AKSK). Residues 17–91 (AHPPAAEMVA…GASGSFKVNV (75 aa)) enclose the H15 domain. Basic and acidic residues predominate over residues 98 to 124 (ASEKAKKEKEKAKLLAQREKAKEKGCS). Composition is skewed to basic residues over residues 135–150 (PKKVKAAPKKAKKPVK) and 157–205 (EKKK…AKSK).

It belongs to the histone H1/H5 family.

It localises to the nucleus. The protein localises to the chromosome. In terms of biological role, histones H1 are necessary for the condensation of nucleosome chains into higher-order structures. The sequence is that of Histone H1, early embryonic from Strongylocentrotus purpuratus (Purple sea urchin).